We begin with the raw amino-acid sequence, 778 residues long: Endonuclease MutS2 (778 aa).

328–335 (GPNTGGKT) is an ATP binding site. One can recognise a Smr domain in the interval 702–777 (LDLRGKRYEE…GSGATIVTFK (76 aa)).

The protein belongs to the DNA mismatch repair MutS family. MutS2 subfamily. Homodimer. Binds to stalled ribosomes, contacting rRNA.

Its function is as follows. Endonuclease that is involved in the suppression of homologous recombination and thus may have a key role in the control of bacterial genetic diversity. In terms of biological role, acts as a ribosome collision sensor, splitting the ribosome into its 2 subunits. Detects stalled/collided 70S ribosomes which it binds and splits by an ATP-hydrolysis driven conformational change. Acts upstream of the ribosome quality control system (RQC), a ribosome-associated complex that mediates the extraction of incompletely synthesized nascent chains from stalled ribosomes and their subsequent degradation. Probably generates substrates for RQC. This Streptococcus pneumoniae serotype 19F (strain G54) protein is Endonuclease MutS2.